A 712-amino-acid chain; its full sequence is Polyribonucleotide nucleotidyltransferase (712 aa).

Positions 487 and 493 each coordinate Mg(2+). Residues 554–613 (PRIEVMNIPVDKIREVIGSGGKVIREIVEKTGAKINIEDDGTVKIASSSGKEIEAARKWI) form the KH domain. Residues 623 to 691 (GQIYEGTVVK…ERGKVRLSMK (69 aa)) enclose the S1 motif domain.

This sequence belongs to the polyribonucleotide nucleotidyltransferase family. It depends on Mg(2+) as a cofactor.

Its subcellular location is the cytoplasm. It carries out the reaction RNA(n+1) + phosphate = RNA(n) + a ribonucleoside 5'-diphosphate. Functionally, involved in mRNA degradation. Catalyzes the phosphorolysis of single-stranded polyribonucleotides processively in the 3'- to 5'-direction. The polypeptide is Polyribonucleotide nucleotidyltransferase (Rhizobium leguminosarum bv. trifolii (strain WSM2304)).